Here is a 1997-residue protein sequence, read N- to C-terminus: Otoferlin (1997 aa).

In terms of domain architecture, C2 1 spans 1–98 (MALLIHLKTV…VEESHVEVTD (98 aa)). The Cytoplasmic portion of the chain corresponds to 1 to 1963 (MALLIHLKTV…ARYFLWHTYR (1963 aa)). A disordered region spans residues 128 to 171 (WDDGDFLGDESLQEEEKDSQETDGLLPGSRPSSRPPGEKSFRRA). The span at 129 to 145 (DDGDFLGDESLQEEEKD) shows a compositional bias: acidic residues. C2 domains are found at residues 236–357 (KRSK…HKWA) and 400–531 (IEGN…FLPT). The tract at residues 642–694 (NEVDGLSRPQRPRPRKEPGDEEEVDLIQNASDDEAGDAGDLASVSSTPPMRPQ) is disordered. Acidic residues predominate over residues 660 to 678 (GDEEEVDLIQNASDDEAGD). Residues 792–821 (RERLKSCMRELENMGQQARMLRAQVKRHTV) adopt a coiled-coil conformation. C2 domains follow at residues 944 to 1069 (LHAF…PPRF) and 1115 to 1242 (DRGP…PSWN). The Ca(2+) site is built by Asp-976, Asp-982, Asp-1038, Asp-1040, and Asp-1046. Disordered stretches follow at residues 1299-1324 (AEEE…PDES) and 1343-1405 (LRQQ…KPKI). Acidic residues-rich tracts occupy residues 1314-1324 (EEPEEEEPDES) and 1352-1361 (DLEEKEEVDN). Basic and acidic residues predominate over residues 1370-1383 (KGKEKARAAKEEKK). Residues 1387–1396 (QSSGSGQGSE) show a composition bias toward low complexity. C2 domains are found at residues 1464-1593 (LPED…ATCG) and 1714-1865 (DMPA…KQCT). 8 residues coordinate Ca(2+): Asp-1508, Asp-1514, Asp-1563, Asp-1565, Asp-1571, Asp-1836, Ser-1839, and Asp-1842. A helical transmembrane segment spans residues 1964–1984 (WLLLKLLLLLLLLLLLALFLY). Residues 1985 to 1997 (SVPGYLVKKILGA) are Extracellular-facing.

It belongs to the ferlin family. In terms of assembly, interacts with SNAP2; the interaction is direct. Interacts with STX1; the interaction is direct. Interacts with RAB8B. The cofactor is Ca(2+). In terms of tissue distribution, isoform 1 and isoform 3 are found in adult brain. Isoform 2 is expressed in the fetus and in adult brain, heart, placenta, skeletal muscle and kidney.

The protein resides in the cytoplasmic vesicle. The protein localises to the secretory vesicle. It localises to the synaptic vesicle membrane. It is found in the basolateral cell membrane. Its subcellular location is the endoplasmic reticulum membrane. The protein resides in the golgi apparatus membrane. The protein localises to the presynaptic cell membrane. It localises to the cell membrane. In terms of biological role, key calcium ion sensor involved in the Ca(2+)-triggered synaptic vesicle-plasma membrane fusion and in the control of neurotransmitter release at these output synapses. Interacts in a calcium-dependent manner to the presynaptic SNARE proteins at ribbon synapses of cochlear inner hair cells (IHCs) to trigger exocytosis of neurotransmitter. Also essential to synaptic exocytosis in immature outer hair cells (OHCs). May also play a role within the recycling of endosomes. The polypeptide is Otoferlin (OTOF) (Homo sapiens (Human)).